The following is a 2535-amino-acid chain: Piezo-type mechanosensitive ion channel component 1 (2535 aa).

3 helical membrane-spanning segments follow: residues 13–25 (LLLP…ASLL), 29–44 (ALSL…LPWL), and 59–81 (LLRA…QICL). An N-linked (GlcNAc...) asparagine glycan is attached at Asn100. 5 helical membrane-spanning segments follow: residues 122–138 (VAPD…CLGL), 193–212 (LLVT…AGIA), 215–234 (SAFS…WWSC), 246–266 (LCVM…CYQT), and 308–328 (WPIY…TSLL). The span at 346-357 (DEEHELELDQLE) shows a compositional bias: acidic residues. The tract at residues 346 to 377 (DEEHELELDQLEPEPQARGTTQGATPTTTGPD) is disordered. Residues 358–376 (PEPQARGTTQGATPTTTGP) show a composition bias toward low complexity. N-linked (GlcNAc...) asparagine glycosylation is present at Asn380. Transmembrane regions (helical) follow at residues 416 to 436 (LILD…SIMY), 439 to 454 (WLTF…IWTV), 460 to 482 (LAML…RYVW), 510 to 527 (CLDL…WLLL), 572 to 592 (IYVK…SFAG), 594 to 614 (LVVY…LFQV), 625 to 646 (VFWW…TFQF), and 677 to 693 (LFSS…ACIL). The residue at position 749 (Ser749) is a Phosphoserine. 12 helical membrane-spanning segments follow: residues 803 to 814 (LVALYTVWVALK), 818 to 831 (VMNL…AFAL), 846 to 860 (VWTC…LYQL), 913 to 940 (GYIQ…HYRR), 981 to 996 (GLEI…IGQR), 999 to 1014 (FMVI…ILTR), 1028 to 1043 (CLFL…LLCL), 1083 to 1104 (TNLI…VFSA), 1140 to 1166 (YLDM…TGAT), 1172 to 1190 (GLGY…TTLL), 1204 to 1222 (LILY…SLLS), and 1272 to 1288 (IWDS…RRVF). Positions 1325–1356 (HRQTEERSLAQLKRQMKRIRAKQEKYRQSQAS) form a coiled coil. 2 disordered regions span residues 1345–1383 (AKQE…RTQW) and 1556–1597 (SGPV…NTRS). Polar residues predominate over residues 1352 to 1365 (QSQASRGQLQSTDP). Ser1372 and Ser1377 each carry phosphoserine. Residues 1579–1597 (SSMTDDTGSPLSTGYNTRS) are compositionally biased toward polar residues. Residues Ser1614, Ser1618, and Ser1633 each carry the phosphoserine modification. The next 4 helical transmembrane spans lie at 1644 to 1687 (PELE…LNHM), 1692 to 1707 (AASL…WAML), 1716 to 1734 (FWMT…KYLF), and 1767 to 1788 (DSYI…SQLL). Basic and acidic residues-rich tracts occupy residues 1801 to 1811 (PKDHCRSSEKD) and 1842 to 1867 (PKDH…DLKP). Residues 1801–1911 (PKDHCRSSEK…GREAAGRKRL (111 aa)) form a disordered region. Over residues 1868–1881 (QHRRHISIRFRRRK) the composition is skewed to basic residues. The next 5 membrane-spanning stretches (helical) occupy residues 1965-1984 (YALM…FGFW), 2005-2021 (PQAF…TMVI), 2036-2056 (AFQV…LPAV), 2065-2080 (AVAQ…YFAL), and 2181-2201 (GLII…MSLI). Cys2425 and Cys2429 are oxidised to a cystine. A helical membrane pass occupies residues 2446–2466 (LGFLAGYGIVGLYVSIVLVVG).

Belongs to the PIEZO (TC 1.A.75) family. Homotrimer; the homotrimer forms a propeller-shaped Piezo channel with a cation-ion conducting pore. Heterotrimeric interaction may occur between PIEZO1 and PIEZO2. Interacts with PKD2. Interacts with STOM13. Interacts with TMC1, TMC2, PCDH15 and CIB2; the interaction may be part of the MET complex. Interacts with MDFIC (via C-terminus); the interaction prolongs Piezo channel inactivation. Interacts with MDFI (via C-terminus); the interaction prolongs Piezo channel inactivation. As to expression, moderate expression in lung and kidney. Very weak expression in heart, spleen and liver.

The protein localises to the endoplasmic reticulum membrane. Its subcellular location is the endoplasmic reticulum-Golgi intermediate compartment membrane. It localises to the cell membrane. It is found in the cell projection. The protein resides in the lamellipodium membrane. It catalyses the reaction K(+)(in) = K(+)(out). The enzyme catalyses Na(+)(in) = Na(+)(out). It carries out the reaction Ca(2+)(in) = Ca(2+)(out). The catalysed reaction is Mg(2+)(in) = Mg(2+)(out). With respect to regulation, regulated by auxillary subunits MDFIC and MDFI. Down-regulated by phosphatidylserines exposed on the cell surface. Divalent ions decrease the single-channel permeability of K(+). Functionally, pore-forming subunit of the mechanosensitive non-specific cation Piezo channel required for rapidly adapting mechanically activated (MA) currents and has a key role in sensing touch and tactile pain. Piezo channels are homotrimeric three-blade propeller-shaped structures that utilize a cap-motion and plug-and-latch mechanism to gate their ion-conducting pathways. Generates currents characterized by a linear current-voltage relationship that are sensitive to ruthenium red and gadolinium. Conductance to monovalent alkali ions is highest for K(+), intermediate for Na(+) and lowest for Li(+). Divalent ions except for Mn(2+) permeate the channel but more slowly than the monovalent ions and they also reduce K(+) currents. Plays a key role in epithelial cell adhesion by maintaining integrin activation through R-Ras recruitment to the ER, most probably in its activated state, and subsequent stimulation of calpain signaling. In inner ear hair cells, PIEZO1/2 subunits may constitute part of the mechanotransducer (MET) non-selective cation channel complex where they may act as pore-forming ion-conducting component in the complex. In the kidney, may contribute to the detection of intraluminal pressure changes and to urine flow sensing. Acts as a shear-stress sensor that promotes endothelial cell organization and alignment in the direction of blood flow through calpain activation. Plays a key role in blood vessel formation and vascular structure in both development and adult physiology. Acts as a sensor of phosphatidylserine (PS) flipping at the plasma membrane and governs morphogenesis of muscle cells. In myoblasts, flippase-mediated PS enrichment at the inner leaflet of plasma membrane triggers channel activation and Ca(2+) influx followed by Rho GTPases signal transduction, leading to assembly of cortical actomyosin fibers and myotube formation. This Rattus norvegicus (Rat) protein is Piezo-type mechanosensitive ion channel component 1 (Piezo1).